We begin with the raw amino-acid sequence, 277 residues long: Shikimate dehydrogenase (NADP(+)) (277 aa).

Shikimate contacts are provided by residues 18–20 (SKS) and Thr65. Lys69 functions as the Proton acceptor in the catalytic mechanism. Glu81 is an NADP(+) binding site. Shikimate contacts are provided by Asn90 and Asp106. NADP(+)-binding positions include 130-134 (GAGGA), 154-159 (NRTFSK), and Met217. Tyr219 is a binding site for shikimate. Gly241 lines the NADP(+) pocket.

This sequence belongs to the shikimate dehydrogenase family. As to quaternary structure, homodimer.

The catalysed reaction is shikimate + NADP(+) = 3-dehydroshikimate + NADPH + H(+). Its pathway is metabolic intermediate biosynthesis; chorismate biosynthesis; chorismate from D-erythrose 4-phosphate and phosphoenolpyruvate: step 4/7. Functionally, involved in the biosynthesis of the chorismate, which leads to the biosynthesis of aromatic amino acids. Catalyzes the reversible NADPH linked reduction of 3-dehydroshikimate (DHSA) to yield shikimate (SA). The polypeptide is Shikimate dehydrogenase (NADP(+)) (Vibrio campbellii (strain ATCC BAA-1116)).